The sequence spans 70 residues: Small ribosomal subunit protein bS21 (70 aa).

It belongs to the bacterial ribosomal protein bS21 family.

In Herminiimonas arsenicoxydans, this protein is Small ribosomal subunit protein bS21.